We begin with the raw amino-acid sequence, 176 residues long: MGDPKKPRKKWMGPKHPWIKERLVRELELVGRYGLRNKRELWKLETLARYFRHRARSLLALPPEVREKEEKALLARLNELGVLPENATLDDVLNLTAEHFLERRLQTIVYKKGLARTIYEARQLIVHGHIAIAGRKIRSPGYLVKKDEEDLVDYAPTSPYAKRRLEEQVQQEEAAS.

The S4 RNA-binding domain maps to 103-165; that stretch reads RRLQTIVYKK…PTSPYAKRRL (63 aa).

Belongs to the universal ribosomal protein uS4 family. Part of the 30S ribosomal subunit. Contacts protein S5. The interaction surface between S4 and S5 is involved in control of translational fidelity.

One of the primary rRNA binding proteins, it binds directly to 16S rRNA where it nucleates assembly of the body of the 30S subunit. In terms of biological role, with S5 and S12 plays an important role in translational accuracy. The sequence is that of Small ribosomal subunit protein uS4 from Hyperthermus butylicus (strain DSM 5456 / JCM 9403 / PLM1-5).